Here is a 447-residue protein sequence, read N- to C-terminus: 23S rRNA (uracil(1939)-C(5))-methyltransferase RlmD (447 aa).

The TRAM domain occupies 7 to 66; the sequence is RKPLSQEPQKASIEALTHEGRGIAHVAGKTVFIDGALPGETVWFHYLRRRGKFDEGRVLE. Residues cysteine 79, cysteine 85, cysteine 88, and cysteine 168 each coordinate [4Fe-4S] cluster. Positions 275, 304, 309, 325, 352, and 374 each coordinate S-adenosyl-L-methionine. Cysteine 400 serves as the catalytic Nucleophile.

It belongs to the class I-like SAM-binding methyltransferase superfamily. RNA M5U methyltransferase family. RlmD subfamily.

The enzyme catalyses uridine(1939) in 23S rRNA + S-adenosyl-L-methionine = 5-methyluridine(1939) in 23S rRNA + S-adenosyl-L-homocysteine + H(+). Its function is as follows. Catalyzes the formation of 5-methyl-uridine at position 1939 (m5U1939) in 23S rRNA. In Nitrosococcus oceani (strain ATCC 19707 / BCRC 17464 / JCM 30415 / NCIMB 11848 / C-107), this protein is 23S rRNA (uracil(1939)-C(5))-methyltransferase RlmD.